We begin with the raw amino-acid sequence, 334 residues long: MSILQPLEDLSANIVTLVFNIYNFEHLDGSYTSDLKEHNGIYWCVRIQSNKAAKSQKRRVSIYLVCNPNNSSPDWSVTTSFGFRIINSWGKSRNKISTLFNHTFTSNETSKGTSGYCTWDELTAANSGFLVEGRFQIEFDLNVNSSTGIRKEKISKEKYEKYIADGELITDGKTVKVCLALLADNSPILYNLFYVEKPGQTTFHIFDFTYEAILGMVSILQLDSFEVSVYNYRDLLELGQRYQIPSVTDKCEEFLLKTRYVSIETKLKLSEIFELHYLQFRTLERVTCIHHIDNILDDHMDIGEKTYDALLEKMKHLKTQEDGQLCSCKRNHVR.

One can recognise an MATH domain in the interval 14 to 141 (IVTLVFNIYN…EGRFQIEFDL (128 aa)). The BTB domain maps to 164-229 (ADGELITDGK…LQLDSFEVSV (66 aa)).

This chain is BTB and MATH domain-containing protein 39 (bath-39), found in Caenorhabditis elegans.